We begin with the raw amino-acid sequence, 271 residues long: Type III pantothenate kinase (271 aa).

An ATP-binding site is contributed by 6–13 (DVRNTHTV). 109–112 (GADR) provides a ligand contact to substrate. Asp111 serves as the catalytic Proton acceptor. Asp131 contributes to the K(+) binding site. Ser134 serves as a coordination point for ATP. Residue Thr186 participates in substrate binding.

This sequence belongs to the type III pantothenate kinase family. As to quaternary structure, homodimer. The cofactor is NH4(+). K(+) serves as cofactor.

It is found in the cytoplasm. The enzyme catalyses (R)-pantothenate + ATP = (R)-4'-phosphopantothenate + ADP + H(+). It participates in cofactor biosynthesis; coenzyme A biosynthesis; CoA from (R)-pantothenate: step 1/5. In terms of biological role, catalyzes the phosphorylation of pantothenate (Pan), the first step in CoA biosynthesis. The protein is Type III pantothenate kinase of Mycolicibacterium smegmatis (strain ATCC 700084 / mc(2)155) (Mycobacterium smegmatis).